Here is a 289-residue protein sequence, read N- to C-terminus: Paired box protein 5 homolog (289 aa).

The paired DNA-binding region spans 29 to 155; that stretch reads SHTGVNQLGG…SSINRIVRNK (127 aa). Residues 32 to 88 form a PAI subdomain region; that stretch reads GVNQLGGVFVNGRPLADTVRAQIVEMSQHGTRPCDISRQLKVSHGCVSKILGRYYST. Residues 107-155 form an RED subdomain region; that stretch reads RVVECIAGYKRANPTMFAWEIRQKLIEDQICGEENVPSVSSINRIVRNK. Composition is skewed to low complexity over residues 166–179 and 189–198; these read SVTS…SATS and VQQHMQQSTS. Residues 166–198 form a disordered region; that stretch reads SVTSSAARPSSATSHHQRSPPRGVQQHMQQSTS.

It localises to the nucleus. The protein localises to the chromosome. Its function is as follows. Transcription factor. Binds to specific DNA sequence motifs in regulatory elements, for example in the genes encoding transcription factor lin-48, apoptosis regulator ced-9 and neuropeptide-like protein nlp-2. Specifies cell fate, playing an essential role in embryonic and larval development. Involved in morphogenesis of the vulva and uterus in hermaphrodites and of the rectal epithelium of the tail in males. Plays multiple roles in the development of the egg-laying system, acting in both lin-3/EGF-pathway-dependent and -independent processes. Positively regulates expression of neuropeptide-like proteins nlp-2 and nlp-7 in uvl cells in an EGF-pathway-dependent manner. Involved in negatively modulating apoptosis in germline and somatic cells, acting in partial redundancy with transcription factor pax-2, probably by directly regulating transcription of ced-9. Positively regulates transcription of lin-48 in hindgut cells and functions in the development of the hindgut. The polypeptide is Paired box protein 5 homolog (Caenorhabditis elegans).